Here is a 579-residue protein sequence, read N- to C-terminus: Leucine-rich repeat-containing protein 15 (579 aa).

The first 21 residues, 1-21 (MPLKHYLLLLVSCQAWAAGLA), serve as a signal peptide directing secretion. Residues 22–53 (YYGCPSECTCSRASQVECTGAQIVAMPSPLPW) form the LRRNT domain. At 22 to 536 (YYGCPSECTC…TWGMTDAQSG (515 aa)) the chain is on the extracellular side. LRR repeat units lie at residues 54–75 (NAMS…KFLN), 78–99 (ALIA…AFRN), 102–123 (SLRH…LFQD), 126–147 (NLET…QFSQ), 150–171 (NLKE…VFDH), 174–195 (GLTK…VFQH), 198–219 (NLQV…TFDA), 222–243 (NLQE…LFHN), 246–267 (NLQR…IFMQ), 270–291 (HLNK…VFGP), 294–315 (NLRE…AFSH), 318–339 (QLQV…AFNG), 342–363 (NLRE…VFRS), 366–387 (NLRN…IFAN), and 390–411 (GLMT…IFDH). N75 carries an N-linked (GlcNAc...) asparagine glycan. N-linked (GlcNAc...) asparagine glycosylation occurs at N369. The region spanning 423–473 (NPWRCDSNILPLHDWLILNRARLGTDTLPVCSSPASVRGQSLVIINVNFPG) is the LRRCT domain. The interval 476 to 509 (VQGPETPEVSSYPDTSSYPDSTSISSTTEITRST) is disordered. Positions 485 to 506 (SSYPDTSSYPDSTSISSTTEIT) are enriched in low complexity. The helical transmembrane segment at 537–557 (LAIAAIVIGIIALACSLAACI) threads the bilayer. The Cytoplasmic segment spans residues 558–579 (CCCCCKKRSQAVLMQMKAPNEC).

As to expression, expressed in chodrocytes (at protein level).

Its subcellular location is the cell membrane. This chain is Leucine-rich repeat-containing protein 15 (Lrrc15), found in Mus musculus (Mouse).